Consider the following 153-residue polypeptide: MAHLVWQDDLNTGIQVIDNQHKRIVEMINHLHDAQQGKEHAAIAEVIEELVDYTLSHFAFEETLMEDAGYQFSRAHKKIHELFIRRVSEYRVRFQAGEDVGDELKGLLSRWLFNHIRNDDAGYVDAVRHSMSELVKDKSEGGWLSRSMKRFFG.

Positions 21, 57, 61, 76, 80, 115, and 120 each coordinate Fe cation.

Belongs to the hemerythrin family. In terms of assembly, monomer.

Oxygen-binding protein. May be involved in a storage mechanism or for delivery to oxygen-requiring enzymes. The oxygen-binding site contains two iron atoms. This is Bacteriohemerythrin from Pseudomonas aeruginosa (strain UCBPP-PA14).